Consider the following 176-residue polypeptide: NAD(P)H-quinone oxidoreductase subunit 6, chloroplastic (176 aa).

5 consecutive transmembrane segments (helical) span residues 10 to 30, 32 to 52, 63 to 83, 92 to 112, and 152 to 172; these read FILVFLGSGLILGSLGVVFFT, TIFSAFSLGLVLVCVSLFYIL, LLIYVGAINVLIIFAVMFMNG, VWTVGDGITLMVCTSIFISQI, and FFLPFELISIILLVALIGAIF.

It belongs to the complex I subunit 6 family. NDH is composed of at least 16 different subunits, 5 of which are encoded in the nucleus.

The protein localises to the plastid. It is found in the chloroplast thylakoid membrane. It catalyses the reaction a plastoquinone + NADH + (n+1) H(+)(in) = a plastoquinol + NAD(+) + n H(+)(out). It carries out the reaction a plastoquinone + NADPH + (n+1) H(+)(in) = a plastoquinol + NADP(+) + n H(+)(out). Functionally, NDH shuttles electrons from NAD(P)H:plastoquinone, via FMN and iron-sulfur (Fe-S) centers, to quinones in the photosynthetic chain and possibly in a chloroplast respiratory chain. The immediate electron acceptor for the enzyme in this species is believed to be plastoquinone. Couples the redox reaction to proton translocation, and thus conserves the redox energy in a proton gradient. This Phaseolus vulgaris (Kidney bean) protein is NAD(P)H-quinone oxidoreductase subunit 6, chloroplastic (ndhG).